Here is an 89-residue protein sequence, read N- to C-terminus: Small ribosomal subunit protein uS15 (89 aa).

Residues 1–21 (MAITQERKNQLINEFKTHESD) are compositionally biased toward basic and acidic residues. Residues 1–24 (MAITQERKNQLINEFKTHESDTGS) form a disordered region.

Belongs to the universal ribosomal protein uS15 family. Part of the 30S ribosomal subunit. Forms a bridge to the 50S subunit in the 70S ribosome, contacting the 23S rRNA.

Its function is as follows. One of the primary rRNA binding proteins, it binds directly to 16S rRNA where it helps nucleate assembly of the platform of the 30S subunit by binding and bridging several RNA helices of the 16S rRNA. In terms of biological role, forms an intersubunit bridge (bridge B4) with the 23S rRNA of the 50S subunit in the ribosome. The polypeptide is Small ribosomal subunit protein uS15 (Bacillus subtilis (strain 168)).